A 288-amino-acid polypeptide reads, in one-letter code: Glucose-1-phosphate thymidylyltransferase (288 aa).

Glycine 8 contacts dTDP-alpha-D-glucose. Glycine 8, glycine 11, threonine 12, arginine 13, lysine 23, glutamine 24, glutamine 80, glycine 85, and aspartate 108 together coordinate dTTP. DTDP-alpha-D-glucose is bound by residues lysine 23, glutamine 24, glutamine 80, glycine 85, aspartate 108, asparagine 109, glycine 143, glutamate 158, lysine 159, valine 169, and aspartate 222. Aspartate 108 serves as a coordination point for Mg(2+). Residue aspartate 222 participates in Mg(2+) binding.

It belongs to the glucose-1-phosphate thymidylyltransferase family. It depends on Mg(2+) as a cofactor.

The catalysed reaction is dTTP + alpha-D-glucose 1-phosphate + H(+) = dTDP-alpha-D-glucose + diphosphate. The protein operates within carbohydrate biosynthesis; dTDP-L-rhamnose biosynthesis. Catalyzes the conversion of glucose-1-phosphate and dTTP to dTDP-glucose and pyrophosphate. Involved in the biosynthesis of the dTDP-L-rhamnose which is a component of the critical linker, D-N-acetylglucosamine-L-rhamnose disaccharide, which connects the galactan region of arabinogalactan to peptidoglycan via a phosphodiester linkage. This is Glucose-1-phosphate thymidylyltransferase (rmlA) from Mycobacterium tuberculosis (strain CDC 1551 / Oshkosh).